A 381-amino-acid chain; its full sequence is NF-kappa-B inhibitor-like protein 1 (381 aa).

A disordered region spans residues 1–34; it reads MSNPSPQVPEEEASTSVCRPKSSMASTSRRQRRE. 2 ANK repeats span residues 64 to 93 and 97 to 133; these read GQPP…DPAH and HGDT…IKNK. 3 disordered regions span residues 131–167, 186–242, and 256–294; these read KNKD…EWRQ, GDAS…QEEE, and ELRE…RGSL. Ser-150 carries the post-translational modification Phosphoserine. Acidic residues predominate over residues 150 to 159; sequence SAEEEEEDDA. Positions 256–287 are enriched in basic and acidic residues; the sequence is ELRESRARRAQEALGDREPKPARAGPRAEHPR.

Interacts with CACTIN (via N-terminal domain); the interaction occurs in a pro-inflammatory-independent manner.

The protein resides in the nucleus. Involved in the regulation of innate immune response. Acts as negative regulator of Toll-like receptor and interferon-regulatory factor (IRF) signaling pathways. Contributes to the negative regulation of transcriptional activation of NF-kappa-B target genes in response to endogenous pro-inflammatory stimuli. The protein is NF-kappa-B inhibitor-like protein 1 (NFKBIL1) of Macaca mulatta (Rhesus macaque).